We begin with the raw amino-acid sequence, 336 residues long: Foldase protein PrsA (336 aa).

An N-terminal signal peptide occupies residues 1–22; the sequence is MKSAKKLLSVLCLGIFILTFTA. A lipid anchor (N-palmitoyl cysteine) is attached at C23. C23 is lipidated: S-diacylglycerol cysteine. Residues 194–286 enclose the PpiC domain; it reads PNTMNVSHIL…WGYHIIKINS (93 aa).

It belongs to the PrsA family.

The protein localises to the cell membrane. The enzyme catalyses [protein]-peptidylproline (omega=180) = [protein]-peptidylproline (omega=0). Plays a major role in protein secretion by helping the post-translocational extracellular folding of several secreted proteins. In Clostridium botulinum (strain Langeland / NCTC 10281 / Type F), this protein is Foldase protein PrsA.